We begin with the raw amino-acid sequence, 241 residues long: Small ribosomal subunit protein uS3 (241 aa).

One can recognise a KH type-2 domain in the interval 22 to 91 (VDEYLAYKFH…NPQVTVVKVE (70 aa)). The interval 218 to 241 (EMQQTQPEAPTLEETVEQSGGETQ) is disordered.

Belongs to the universal ribosomal protein uS3 family. In terms of assembly, part of the 30S ribosomal subunit.

Binds the lower part of the 30S subunit head. The chain is Small ribosomal subunit protein uS3 from Ignicoccus hospitalis (strain KIN4/I / DSM 18386 / JCM 14125).